The following is a 168-amino-acid chain: Shikimate kinase (168 aa).

10–15 serves as a coordination point for ATP; sequence GVGKTT. T14 contributes to the Mg(2+) binding site. 3 residues coordinate substrate: D32, R56, and G77. Residue R115 coordinates ATP. R133 provides a ligand contact to substrate.

This sequence belongs to the shikimate kinase family. Monomer. Mg(2+) serves as cofactor.

Its subcellular location is the cytoplasm. It catalyses the reaction shikimate + ATP = 3-phosphoshikimate + ADP + H(+). The protein operates within metabolic intermediate biosynthesis; chorismate biosynthesis; chorismate from D-erythrose 4-phosphate and phosphoenolpyruvate: step 5/7. Its function is as follows. Catalyzes the specific phosphorylation of the 3-hydroxyl group of shikimic acid using ATP as a cosubstrate. This Macrococcus caseolyticus (strain JCSC5402) (Macrococcoides caseolyticum) protein is Shikimate kinase.